A 257-amino-acid polypeptide reads, in one-letter code: Imidazole glycerol phosphate synthase subunit HisF (257 aa).

Active-site residues include aspartate 11 and aspartate 130.

It belongs to the HisA/HisF family. As to quaternary structure, heterodimer of HisH and HisF.

It is found in the cytoplasm. It catalyses the reaction 5-[(5-phospho-1-deoxy-D-ribulos-1-ylimino)methylamino]-1-(5-phospho-beta-D-ribosyl)imidazole-4-carboxamide + L-glutamine = D-erythro-1-(imidazol-4-yl)glycerol 3-phosphate + 5-amino-1-(5-phospho-beta-D-ribosyl)imidazole-4-carboxamide + L-glutamate + H(+). The protein operates within amino-acid biosynthesis; L-histidine biosynthesis; L-histidine from 5-phospho-alpha-D-ribose 1-diphosphate: step 5/9. IGPS catalyzes the conversion of PRFAR and glutamine to IGP, AICAR and glutamate. The HisF subunit catalyzes the cyclization activity that produces IGP and AICAR from PRFAR using the ammonia provided by the HisH subunit. The sequence is that of Imidazole glycerol phosphate synthase subunit HisF from Prochlorococcus marinus (strain MIT 9515).